The chain runs to 275 residues: Shikimate dehydrogenase (NADP(+)) (275 aa).

Shikimate-binding positions include 16–18 and Thr63; that span reads SKS. Catalysis depends on Lys67, which acts as the Proton acceptor. Positions 88 and 104 each coordinate shikimate. NADP(+) is bound by residues 129-133, 153-158, and Met219; these read GAGGA and NRTVAR. Tyr221 lines the shikimate pocket. Position 243 (Gly243) interacts with NADP(+).

It belongs to the shikimate dehydrogenase family. Homodimer.

The enzyme catalyses shikimate + NADP(+) = 3-dehydroshikimate + NADPH + H(+). Its pathway is metabolic intermediate biosynthesis; chorismate biosynthesis; chorismate from D-erythrose 4-phosphate and phosphoenolpyruvate: step 4/7. In terms of biological role, involved in the biosynthesis of the chorismate, which leads to the biosynthesis of aromatic amino acids. Catalyzes the reversible NADPH linked reduction of 3-dehydroshikimate (DHSA) to yield shikimate (SA). This chain is Shikimate dehydrogenase (NADP(+)), found in Marinobacter nauticus (strain ATCC 700491 / DSM 11845 / VT8) (Marinobacter aquaeolei).